A 25-amino-acid chain; its full sequence is Pregnancy-associated glycoprotein 59g (25 aa).

N-linked (GlcNAc...) asparagine glycosylation is present at Asn4.

It belongs to the peptidase A1 family. As to expression, highly expressed in the placenta between day 60 and day 100 of gestation.

The protein resides in the secreted. Its subcellular location is the extracellular space. This Ovis aries (Sheep) protein is Pregnancy-associated glycoprotein 59g.